The primary structure comprises 404 residues: Dihydrosphingosine 1-phosphate phosphatase YSR3 (404 aa).

The Lumenal segment spans residues 1 to 86; it reads MTIIQTVTEL…PFRDVYFKYT (86 aa). Asn62 carries N-linked (GlcNAc...) asparagine glycosylation. A helical transmembrane segment spans residues 87–107; that stretch reads SLMGSHMFYVIVLPMPVWLGY. Residues 108–113 are Cytoplasmic-facing; that stretch reads RDLTRD. A helical membrane pass occupies residues 114–134; the sequence is MIYVLGYSIYLSGYLKDYWCL. Residues 129–137 form a phosphatase sequence motif I region; sequence KDYWCLPRP. At 135 to 154 the chain is on the lumenal side; the sequence is PRPKSPPVDRITLSEYTTKE. Residues 155–176 form a helical membrane-spanning segment; it reads YGAPSSHSANATAVSLLFFWRI. The phosphatase sequence motif II stretch occupies residues 158-161; that stretch reads PSSH. Catalysis depends on His161, which acts as the Proton donor. Over 177 to 182 the chain is Cytoplasmic; it reads CLSDTL. The chain crosses the membrane as a helical span at residues 183-203; sequence VWPTKLLLLSLVIFYYLTLVF. Residues 204–215 are Lumenal-facing; sequence GRVYCGMHGMLD. The interval 204–215 is phosphatase sequence motif III; it reads GRVYCGMHGMLD. Catalysis depends on His211, which acts as the Nucleophile. A helical membrane pass occupies residues 216-236; it reads LFSGAAVGAICFFIRIWVVHA. Residues 237-241 are Cytoplasmic-facing; the sequence is LRNFQ. The helical transmembrane segment at 242–262 threads the bilayer; that stretch reads IGEHLWFPLLSVAWGLFILFN. The Lumenal segment spans residues 263–319; that stretch reads HVRPIDECPCFEDSVAFIGVVSGLDCSDWLTERYGWNLVCSRYASCGSKVFLRPLVG. A helical transmembrane segment spans residues 320–340; the sequence is VASVIVWKDVISKTAVYTLLI. At 341–379 the chain is on the cytoplasmic side; that stretch reads KLLRFHDDRSEKVHFHNETSEEEECLLYSGVSKVEIVGR. A helical membrane pass occupies residues 380–400; it reads FLIYAGIPTTVFLLCPVFFTW. At 401–404 the chain is on the lumenal side; that stretch reads TNLR.

This sequence belongs to the type 2 lipid phosphate phosphatase family.

It is found in the endoplasmic reticulum membrane. The enzyme catalyses sphinganine 1-phosphate + H2O = sphinganine + phosphate. Functionally, dihydrosphingosine 1-phosphate phosphatase required for efficient ceramide synthesis from exogenous sphingoid bases. Involved in endocytosis and calcium-mediated signaling. This chain is Dihydrosphingosine 1-phosphate phosphatase YSR3, found in Saccharomyces cerevisiae (strain ATCC 204508 / S288c) (Baker's yeast).